A 387-amino-acid polypeptide reads, in one-letter code: O-phospho-L-seryl-tRNA:Cys-tRNA synthase 2 (387 aa).

Pyridoxal 5'-phosphate is bound by residues 89-90 (AR), N196, and 219-221 (SGH). K222 carries the N6-(pyridoxal phosphate)lysine modification.

It belongs to the SepCysS family. Homodimer. Interacts with SepRS. Pyridoxal 5'-phosphate is required as a cofactor.

The catalysed reaction is O-phospho-L-seryl-tRNA(Cys) + hydrogen sulfide + H(+) = L-cysteinyl-tRNA(Cys) + phosphate. Its function is as follows. Converts O-phospho-L-seryl-tRNA(Cys) (Sep-tRNA(Cys)) to L-cysteinyl-tRNA(Cys) (Cys-tRNA(Cys)). The protein is O-phospho-L-seryl-tRNA:Cys-tRNA synthase 2 of Methanococcoides burtonii (strain DSM 6242 / NBRC 107633 / OCM 468 / ACE-M).